Consider the following 445-residue polypeptide: Phosphoglucosamine mutase (445 aa).

S101 functions as the Phosphoserine intermediate in the catalytic mechanism. Mg(2+) contacts are provided by S101, D240, D242, and D244. Residue S101 is modified to Phosphoserine.

This sequence belongs to the phosphohexose mutase family. The cofactor is Mg(2+). In terms of processing, activated by phosphorylation.

The enzyme catalyses alpha-D-glucosamine 1-phosphate = D-glucosamine 6-phosphate. Catalyzes the conversion of glucosamine-6-phosphate to glucosamine-1-phosphate. The chain is Phosphoglucosamine mutase from Pseudomonas aeruginosa (strain UCBPP-PA14).